The sequence spans 241 residues: 2-C-methyl-D-erythritol 4-phosphate cytidylyltransferase (241 aa).

Belongs to the IspD/TarI cytidylyltransferase family. IspD subfamily.

It carries out the reaction 2-C-methyl-D-erythritol 4-phosphate + CTP + H(+) = 4-CDP-2-C-methyl-D-erythritol + diphosphate. It functions in the pathway isoprenoid biosynthesis; isopentenyl diphosphate biosynthesis via DXP pathway; isopentenyl diphosphate from 1-deoxy-D-xylulose 5-phosphate: step 2/6. In terms of biological role, catalyzes the formation of 4-diphosphocytidyl-2-C-methyl-D-erythritol from CTP and 2-C-methyl-D-erythritol 4-phosphate (MEP). In Hahella chejuensis (strain KCTC 2396), this protein is 2-C-methyl-D-erythritol 4-phosphate cytidylyltransferase.